The following is a 550-amino-acid chain: Acetyl-coenzyme A transporter 1 (550 aa).

Basic and acidic residues-rich tracts occupy residues methionine 1–arginine 12 and aspartate 36–leucine 52. The segment at methionine 1–proline 58 is disordered. At methionine 1–serine 74 the chain is on the cytoplasmic side. Serine 42 is modified (phosphoserine). A helical membrane pass occupies residues isoleucine 75 to isoleucine 95. Residues proline 96–serine 113 lie on the Extracellular side of the membrane. N-linked (GlcNAc...) asparagine glycosylation occurs at asparagine 103. The chain crosses the membrane as a helical span at residues phenylalanine 114–phenylalanine 134. Topologically, residues lysine 135–lysine 141 are cytoplasmic. The helical transmembrane segment at serine 142–valine 162 threads the bilayer. The Extracellular segment spans residues aspartate 163–aspartate 175. Residues valine 176–alanine 196 form a helical membrane-spanning segment. Over valine 197–asparagine 217 the chain is Cytoplasmic. Residues serine 218–alanine 238 traverse the membrane as a helical segment. Topologically, residues aspartate 239 to threonine 256 are extracellular. The chain crosses the membrane as a helical span at residues leucine 257–leucine 277. The Cytoplasmic segment spans residues leucine 278–lysine 300. A helical membrane pass occupies residues leucine 301–serine 321. The Extracellular portion of the chain corresponds to lysine 322 to glutamate 344. The helical transmembrane segment at histidine 345–serine 365 threads the bilayer. Topologically, residues lysine 366 to asparagine 375 are cytoplasmic. Residues isoleucine 376–tryptophan 396 traverse the membrane as a helical segment. Over tryptophan 397–glycine 405 the chain is Extracellular. The helical transmembrane segment at glycine 406–leucine 426 threads the bilayer. Residues tyrosine 427–aspartate 509 are Cytoplasmic-facing. A helical membrane pass occupies residues glycine 510–glycine 530. The Extracellular portion of the chain corresponds to proline 531–asparagine 550.

Belongs to the SLC33A transporter family. In terms of assembly, homodimerizes. Expressed in all adult tissues examined including brain, heart, kidney, liver and spleen, with maximum expression in liver and kidney.

It localises to the endoplasmic reticulum membrane. The catalysed reaction is acetyl-CoA(in) = acetyl-CoA(out). Acetyl-CoA transporter that mediates active acetyl-CoA import through the endoplasmic reticulum (ER) membrane into the ER lumen where specific ER-based acetyl-CoA:lysine acetyltransferases are responsible for the acetylation of ER-based protein substrate, such as BACE1. Necessary for O-acetylation of gangliosides. The polypeptide is Acetyl-coenzyme A transporter 1 (Slc33a1) (Mus musculus (Mouse)).